A 1078-amino-acid polypeptide reads, in one-letter code: Rho family-interacting cell polarization regulator 2 (1078 aa).

A phosphoserine mark is found at Ser-46 and Ser-62. An involved in cell filopodia formation region spans residues 80–138; sequence MHNLGHKNNNTPKEPQPKRVEEVYRALKNGLDEYLEFHQTELDKLTAQLKDMKRNSRLG. Residues 108 to 137 adopt a coiled-coil conformation; the sequence is NGLDEYLEFHQTELDKLTAQLKDMKRNSRL. Residue Ser-366 is modified to Phosphoserine. Positions 488 to 508 are enriched in polar residues; that stretch reads SSLSSQNEGTEDSSSASSRNS. The interval 488 to 534 is disordered; the sequence is SSLSSQNEGTEDSSSASSRNSLGEDHEPKSHPKSDTVEPGKPGVATR. Over residues 509–525 the composition is skewed to basic and acidic residues; the sequence is LGEDHEPKSHPKSDTVE. Residue Ser-582 is modified to Phosphoserine.

It belongs to the RIPOR family. As to quaternary structure, homooligomer; homooligomerization is regulated by RHOC and leads to the formation of concatemers through the association of N- and C-termini. Interacts (phosphorylated form) with 14-3-3 proteins; these interactions occur during myogenic cell differentiation and also induces T cell proliferation arrest. Interacts (phosphorylated form) with HDAC6; this interaction occurs during early myogenic differentiation, prevents HDAC6 to deacetylate tubulin and also induces T cell proliferation arrest. Interacts with DYSF; this interaction occurs during early myogenic differentiation. Interacts with MYOF. Interacts (via active GTP- or inactive GDP-bound forms) with RHOA; this interaction is direct, blocks the loading of GTP to RHOA and decreases upon chemokine CCL19 stimulation in primary T lymphocytes. Interacts with RHOC. Interacts (via phosphorylated form) with YWHAB; this interaction occurs in a chemokine-dependent manner and does not compete for binding of RIPOR2 with RHOA nor blocks inhibition of RIPOR2-mediated RHOA activity. Interacts with YWHAE. Interacts with YWHAQ. Phosphorylated. Chemokine-induced phosphorylation in neutrophils occurs in a PKC- and AKT-dependent manner, resulting in RIPOR2 interaction with YWHAB and stabilization. Phosphorylated by PKCA, AKT1 and MAPKAPK1A; in vitro. In terms of tissue distribution, expressed in the cochlea. Expressed in inner hair cells and outer hair cells and Hensen's cells (at protein level). Expressed in the brain, cerebellum, spinal cord, retina, heart, spleen liver, kidney, bladder, muscle and lung. Expressed in the cochlea of the inner ear.

The protein localises to the cytoplasm. It localises to the cytoskeleton. Its subcellular location is the cell projection. The protein resides in the filopodium. It is found in the stereocilium. The protein localises to the stereocilium membrane. It localises to the apical cell membrane. Functionally, acts as an inhibitor of the small GTPase RHOA and plays several roles in the regulation of myoblast and hair cell differentiation, lymphocyte T proliferation and neutrophil polarization. Plays a role in fetal mononuclear myoblast differentiation by promoting filopodia and myotube formation. Maintains naive T lymphocytes in a quiescent state and prevents chemokine-induced T lymphocyte responses, such as cell adhesion, polarization and migration. Involved also in the regulation of neutrophil polarization, chemotaxis and adhesion. Required for normal development of inner and outer hair cell stereocilia within the cochlea of the inner ear. Plays a role for maintaining the structural organization of the basal domain of stereocilia. Involved in mechanosensory hair cell function. Required for normal hearing. This Mus musculus (Mouse) protein is Rho family-interacting cell polarization regulator 2.